The sequence spans 211 residues: Ribonuclease HII (211 aa).

The region spanning 21 to 211 is the RNase H type-2 domain; that stretch reads SSIAGLDEAG…APLKSMFDVI (191 aa). Positions 27, 28, and 122 each coordinate a divalent metal cation.

This sequence belongs to the RNase HII family. The cofactor is Mn(2+). It depends on Mg(2+) as a cofactor.

It is found in the cytoplasm. The enzyme catalyses Endonucleolytic cleavage to 5'-phosphomonoester.. In terms of biological role, endonuclease that specifically degrades the RNA of RNA-DNA hybrids. This chain is Ribonuclease HII, found in Dehalococcoides mccartyi (strain ATCC BAA-2266 / KCTC 15142 / 195) (Dehalococcoides ethenogenes (strain 195)).